The chain runs to 676 residues: Double-stranded RNA-specific editase Adar (676 aa).

The disordered stretch occupies residues Met1–Lys51. Polar residues predominate over residues Met8–Gly31. Positions Arg40 to Lys51 are enriched in basic and acidic residues. 2 DRBM domains span residues Gln61 to Gln127 and Ile197 to Asn272. The region spanning Ser348–Phe672 is the A to I editase domain. His372 lines the Zn(2+) pocket. The active-site Proton donor is Glu374. Residues Cys430 and Cys493 each contribute to the Zn(2+) site.

As to expression, expressed in embryonic nervous system; late stage 13 sees ventral nerve cord expression which spreads to brain by stage 16. Expression is maintained through to adulthood.

Has A-to-I RNA editing activity on extended dsRNA: edits RNA-binding protein Rnp4F. A-to-I editing of pre-mRNAs acts predominantly through nervous system targets to affect adult nervous system integrity, function and behavior. Essential for adaptation to environmental stresses, such as oxygen deprivation, and for the prevention of premature neuronal degeneration, through the editing of ion channels as targets. This chain is Double-stranded RNA-specific editase Adar, found in Drosophila melanogaster (Fruit fly).